A 240-amino-acid chain; its full sequence is Lactate utilization protein C (240 aa).

The protein belongs to the LutC/YkgG family.

Its function is as follows. Is involved in L-lactate degradation and allows cells to grow with lactate as the sole carbon source. In Bacillus pumilus (strain SAFR-032), this protein is Lactate utilization protein C.